Reading from the N-terminus, the 144-residue chain is Large ribosomal subunit protein uL15 (144 aa).

The tract at residues 1-57 (MLLNTLSPAAGSKHAPKRLGRGVGSGLGKTGGRGHKGQKSRSGGKVRPGFEGGQMPL) is disordered. The span at 21 to 31 (RGVGSGLGKTG) shows a compositional bias: gly residues. The span at 32 to 44 (GRGHKGQKSRSGG) shows a compositional bias: basic residues.

Belongs to the universal ribosomal protein uL15 family. Part of the 50S ribosomal subunit.

Binds to the 23S rRNA. The polypeptide is Large ribosomal subunit protein uL15 (Vibrio cholerae serotype O1 (strain ATCC 39315 / El Tor Inaba N16961)).